We begin with the raw amino-acid sequence, 238 residues long: Pyridoxine 5'-phosphate synthase (238 aa).

Residue Asn-7 coordinates 3-amino-2-oxopropyl phosphate. 9–10 lines the 1-deoxy-D-xylulose 5-phosphate pocket; it reads DH. A 3-amino-2-oxopropyl phosphate-binding site is contributed by Arg-18. The active-site Proton acceptor is His-43. 1-deoxy-D-xylulose 5-phosphate contacts are provided by Arg-45 and His-50. The Proton acceptor role is filled by Glu-70. Thr-100 serves as a coordination point for 1-deoxy-D-xylulose 5-phosphate. Residue His-190 is the Proton donor of the active site. 3-amino-2-oxopropyl phosphate contacts are provided by residues Gly-191 and 212 to 213; that span reads GH.

The protein belongs to the PNP synthase family. In terms of assembly, homooctamer; tetramer of dimers.

Its subcellular location is the cytoplasm. The enzyme catalyses 3-amino-2-oxopropyl phosphate + 1-deoxy-D-xylulose 5-phosphate = pyridoxine 5'-phosphate + phosphate + 2 H2O + H(+). It participates in cofactor biosynthesis; pyridoxine 5'-phosphate biosynthesis; pyridoxine 5'-phosphate from D-erythrose 4-phosphate: step 5/5. Functionally, catalyzes the complicated ring closure reaction between the two acyclic compounds 1-deoxy-D-xylulose-5-phosphate (DXP) and 3-amino-2-oxopropyl phosphate (1-amino-acetone-3-phosphate or AAP) to form pyridoxine 5'-phosphate (PNP) and inorganic phosphate. This Prochlorococcus marinus (strain MIT 9515) protein is Pyridoxine 5'-phosphate synthase.